We begin with the raw amino-acid sequence, 399 residues long: La protein 2 (399 aa).

The region spanning 3 to 106 (SSFNEETAKK…GRGTKLSKPE (104 aa)) is the HTH La-type RNA-binding domain. Positions 115–192 (RTLAASPFEY…ADLVLIPKSD (78 aa)) constitute an RRM domain. The xRRM domain maps to 269-399 (SLCKDNTDQL…QPTKKARKEP (131 aa)). The segment at 367-399 (AELEGGKEGHKKEKGKDECFENVQPTKKARKEP) is disordered. The span at 370 to 385 (EGGKEGHKKEKGKDEC) shows a compositional bias: basic and acidic residues.

Expressed ubiquitously (at protein level).

The protein localises to the nucleus. It is found in the nucleoplasm. The protein resides in the nucleolus. In terms of biological role, binds to the 3' poly(U) terminus of nascent RNA polymerase III transcripts, protecting them from exonuclease digestion and facilitating their folding and maturation. This is La protein 2 (LA2) from Arabidopsis thaliana (Mouse-ear cress).